Consider the following 781-residue polypeptide: Molybdenum cofactor sulfurase (781 aa).

Lysine 246 carries the N6-(pyridoxal phosphate)lysine modification. Cysteine 413 is a catalytic residue. Residues 635-781 (LRLLRQSGQR…MTCGDVVLVE (147 aa)) form the MOSC domain. Serine 734 is subject to Phosphoserine.

It belongs to the class-V pyridoxal-phosphate-dependent aminotransferase family. MOCOS subfamily. It depends on pyridoxal 5'-phosphate as a cofactor.

It catalyses the reaction Mo-molybdopterin + L-cysteine + AH2 = thio-Mo-molybdopterin + L-alanine + A + H2O. Its pathway is cofactor biosynthesis; molybdopterin biosynthesis. Sulfurates the molybdenum cofactor. Sulfation of molybdenum is essential for xanthine dehydrogenase (XDH) and aldehyde oxidase (ADO) enzymes in which molybdenum cofactor is liganded by 1 oxygen and 1 sulfur atom in active form. The protein is Molybdenum cofactor sulfurase of Drosophila melanogaster (Fruit fly).